The chain runs to 705 residues: Catalase C (705 aa).

A disordered region spans residues 1 to 31 (MAKKPSAPNNTKPATIHDQKATRGNGGELHQ). Active-site residues include H88 and N161. Residue Y375 coordinates heme.

The protein belongs to the catalase family. HPII subfamily. It depends on heme as a cofactor.

The catalysed reaction is 2 H2O2 = O2 + 2 H2O. Its function is as follows. Decomposes hydrogen peroxide into water and oxygen; serves to protect cells from the toxic effects of hydrogen peroxide. Could protect cells in nodules which have a high potential to produce hydrogen peroxide because of the strong reducing conditions required for nitrogen fixation and the action of several proteins. This Rhizobium meliloti (strain 1021) (Ensifer meliloti) protein is Catalase C (katE).